Here is a 270-residue protein sequence, read N- to C-terminus: Interleukin-1 beta (270 aa).

Residues 1–118 constitute a propeptide that is removed on maturation; it reads MARVPEPTSE…KCDDNAFVHD (118 aa).

The protein belongs to the IL-1 family. In terms of assembly, monomer. In its precursor form, weakly interacts with full-length MEFV; the mature cytokine does not interact at all. Interacts with integrins ITGAV:ITGBV and ITGA5:ITGB1; integrin-binding is required for IL1B signaling. Interacts with cargo receptor TMED10; the interaction is direct and is required for the secretion of IL1B mature form. Interacts with HSP90AB1; the interaction facilitates cargo translocation into the ERGIC. Interacts with HSP90B1; the interaction facilitates cargo translocation into the ERGIC.

The protein resides in the cytoplasm. It localises to the cytosol. The protein localises to the secreted. It is found in the lysosome. Its subcellular location is the extracellular exosome. Its function is as follows. Potent pro-inflammatory cytokine. Initially discovered as the major endogenous pyrogen, induces prostaglandin synthesis, neutrophil influx and activation, T-cell activation and cytokine production, B-cell activation and antibody production, and fibroblast proliferation and collagen production. Promotes Th17 differentiation of T-cells. Synergizes with IL12/interleukin-12 to induce IFNG synthesis from T-helper 1 (Th1) cells. Plays a role in angiogenesis by inducing VEGF production synergistically with TNF and IL6. Involved in transduction of inflammation downstream of pyroptosis: its mature form is specifically released in the extracellular milieu by passing through the gasdermin-D (GSDMD) pore. This chain is Interleukin-1 beta (IL1B), found in Mustela putorius furo (European domestic ferret).